Consider the following 392-residue polypeptide: THO complex subunit MFT1 (392 aa).

Acidic residues-rich tracts occupy residues 258-271 (DNID…EDEE) and 290-330 (NVDE…EVDG). Positions 258 to 392 (DNIDEDYESD…SASSSVEEVK (135 aa)) are disordered. Position 266 is a phosphoserine (serine 266). Residues 331–344 (ESSQQEDNSRQGNN) are compositionally biased toward polar residues. Positions 345-367 (EETDKETGVIEEPDAVNDAEEAD) are enriched in acidic residues. The segment covering 377-392 (GTTSDFSASSSVEEVK) has biased composition (polar residues).

As to quaternary structure, component of the THO complex, which is composed of HPR1, MFT1, THO2 and THP2. Together with SUB2, TEX1 and YRA1, THO forms the transcription/export (TREX) complex. THO associates with DNA and RNA in vitro.

The protein resides in the nucleus. Functionally, component the THO subcomplex of the TREX complex, which operates in coupling transcription elongation to mRNA export. The THO complex is recruited to transcribed genes and moves along the gene with the elongating polymerase during transcription. THO is important for stabilizing nascent RNA in the RNA polymerase II elongation complex by preventing formation of DNA:RNA hybrids behind the elongating polymerase. It functions in cotranscriptional formation of an export-competent messenger ribonucleoprotein particle (mRNP) by facilitating the loading of ATP-dependent RNA helicase SUB2 and the mRNA export factor YRA1 along the nascent mRNA. The polypeptide is THO complex subunit MFT1 (MFT1) (Saccharomyces cerevisiae (strain ATCC 204508 / S288c) (Baker's yeast)).